Consider the following 238-residue polypeptide: Cysteine-rich venom protein natrin-2 (238 aa).

The first 19 residues, 1–19, serve as a signal peptide directing secretion; it reads MIAFIVLLSLAAVLQQSSG. Residues 38–164 enclose the SCP domain; that stretch reads VDKHNALRRS…SSKYLYVCQY (127 aa). 8 cysteine pairs are disulfide-bonded: Cys-75–Cys-153, Cys-92–Cys-165, Cys-148–Cys-162, Cys-184–Cys-191, Cys-187–Cys-196, Cys-200–Cys-233, Cys-209–Cys-227, and Cys-218–Cys-231. The ShKT domain maps to 200 to 233; it reads CKHHNVFSNCQSLAKQNACQTEWMKSKCAASCFC.

As to expression, expressed by the venom gland.

It localises to the secreted. Inhibits carbachol-induced muscle contraction and weakly blocks muscle contraction evoked by potassium. The chain is Cysteine-rich venom protein natrin-2 from Naja atra (Chinese cobra).